The primary structure comprises 175 residues: Polyadenylate-binding protein-interacting protein 6 (175 aa).

The PAM2-like motif lies at 7-17; the sequence is TLNPYAAAYVP. The CUE domain maps to 83–126; it reads EMDMDIEYLLATYPGLSQESINDVYLANTCDLDATIEMLNQLEI. Residues 145–175 are disordered; that stretch reads PEIITESSKQKNDGSSASSSSGIRNANVSSS. Residues 166–175 are compositionally biased toward polar residues; it reads GIRNANVSSS.

The protein is Polyadenylate-binding protein-interacting protein 6 (CID6) of Arabidopsis thaliana (Mouse-ear cress).